The primary structure comprises 257 residues: tRNA pseudouridine synthase A (257 aa).

The Nucleophile role is filled by D53. Residue Y111 participates in substrate binding.

It belongs to the tRNA pseudouridine synthase TruA family. As to quaternary structure, homodimer.

The catalysed reaction is uridine(38/39/40) in tRNA = pseudouridine(38/39/40) in tRNA. Formation of pseudouridine at positions 38, 39 and 40 in the anticodon stem and loop of transfer RNAs. The sequence is that of tRNA pseudouridine synthase A from Xanthomonas axonopodis pv. citri (strain 306).